The sequence spans 148 residues: Large ribosomal subunit protein bL9 (148 aa).

The protein belongs to the bacterial ribosomal protein bL9 family.

Binds to the 23S rRNA. In Staphylococcus saprophyticus subsp. saprophyticus (strain ATCC 15305 / DSM 20229 / NCIMB 8711 / NCTC 7292 / S-41), this protein is Large ribosomal subunit protein bL9.